We begin with the raw amino-acid sequence, 82 residues long: MAFTLYALIQTAILFTNAIAVLHEERFLSKIGWGAEQGVGGFGDDPGIKAQLLNLIRSVRTVMRVPLIAVNSVCIVLLLLFG.

2 consecutive transmembrane segments (helical) span residues 2–22 (AFTLYALIQTAILFTNAIAVL) and 62–82 (VMRVPLIAVNSVCIVLLLLFG).

Belongs to the YOS1 family.

The protein localises to the endoplasmic reticulum membrane. Functionally, regulator of endoplasmic reticulum secretion that acts as a key determinant of brain size. Required for secretion of extracellular matrix proteins. Required for correct brain development by depositing sufficient extracellular matrix proteins for tissue integrity and the proliferation of neural progenitors. Acts as a regulator of the unfolded protein response (UPR). This is Immediate early response 3-interacting protein 1 from Danio rerio (Zebrafish).